The sequence spans 335 residues: HTH-type transcriptional regulator RipA (335 aa).

Residues 119–216 enclose the HTH araC/xylS-type domain; that stretch reads RKVAQKLIAY…GDTPSSFTSP (98 aa). 2 DNA-binding regions (H-T-H motif) span residues 136–157 and 183–206; these read LEFAQLHNISSRTLQRQFVAST and IGQVSQMVGFSATSSLTRAFKRHT.

Under iron limitation, represses the acn (aconitase), catA (catechol 1,2 dioxygenase), leuCD (isopropylmalate dehydratase), narKGHJI (nitrite/nitrate transporter and nitrate reductase), sdhCAB (succinate dehydrogenase), pta (phosphotransacetylase) and katA (catalase) genes. The chain is HTH-type transcriptional regulator RipA from Corynebacterium diphtheriae (strain ATCC 700971 / NCTC 13129 / Biotype gravis).